We begin with the raw amino-acid sequence, 284 residues long: NAD kinase (284 aa).

D60 acts as the Proton acceptor in catalysis. Residues 60 to 61 (DG), 134 to 135 (ND), R145, K162, D164, 175 to 180 (TAYSFS), and Q234 each bind NAD(+).

The protein belongs to the NAD kinase family. A divalent metal cation is required as a cofactor.

Its subcellular location is the cytoplasm. It catalyses the reaction NAD(+) + ATP = ADP + NADP(+) + H(+). In terms of biological role, involved in the regulation of the intracellular balance of NAD and NADP, and is a key enzyme in the biosynthesis of NADP. Catalyzes specifically the phosphorylation on 2'-hydroxyl of the adenosine moiety of NAD to yield NADP. The chain is NAD kinase from Clostridium beijerinckii (strain ATCC 51743 / NCIMB 8052) (Clostridium acetobutylicum).